A 295-amino-acid chain; its full sequence is Nucleotide-binding protein PEPE_0450 (295 aa).

12–19 (GMSGAGKT) contacts ATP. 62–65 (DLRS) contacts GTP.

The protein belongs to the RapZ-like family.

Functionally, displays ATPase and GTPase activities. In Pediococcus pentosaceus (strain ATCC 25745 / CCUG 21536 / LMG 10740 / 183-1w), this protein is Nucleotide-binding protein PEPE_0450.